The following is a 237-amino-acid chain: Indole-3-glycerol phosphate synthase (237 aa).

The protein belongs to the TrpC family.

It catalyses the reaction 1-(2-carboxyphenylamino)-1-deoxy-D-ribulose 5-phosphate + H(+) = (1S,2R)-1-C-(indol-3-yl)glycerol 3-phosphate + CO2 + H2O. Its pathway is amino-acid biosynthesis; L-tryptophan biosynthesis; L-tryptophan from chorismate: step 4/5. The polypeptide is Indole-3-glycerol phosphate synthase (Thermoplasma volcanium (strain ATCC 51530 / DSM 4299 / JCM 9571 / NBRC 15438 / GSS1)).